The sequence spans 506 residues: Probable Xaa-Pro aminopeptidase PADG_06815 (506 aa).

Residues Asp285, Asp296, Glu433, and Glu471 each coordinate Mn(2+).

This sequence belongs to the peptidase M24B family. The cofactor is Mn(2+).

It carries out the reaction Release of any N-terminal amino acid, including proline, that is linked to proline, even from a dipeptide or tripeptide.. Its function is as follows. Catalyzes the removal of a penultimate prolyl residue from the N-termini of peptides. This Paracoccidioides brasiliensis (strain Pb18) protein is Probable Xaa-Pro aminopeptidase PADG_06815.